A 274-amino-acid polypeptide reads, in one-letter code: Undecaprenyl-diphosphatase (274 aa).

Transmembrane regions (helical) follow at residues 4 to 24 (LLVI…LLPI), 46 to 66 (VVFE…EYRV), 86 to 106 (INVA…SDFI), 109 to 129 (VLFS…IIMW), 145 to 165 (ISYA…IPGT), 188 to 208 (FSFF…LWEA), 214 to 234 (IEDM…TFAV), and 250 to 270 (FAWY…TGVI).

This sequence belongs to the UppP family.

The protein localises to the cell inner membrane. The enzyme catalyses di-trans,octa-cis-undecaprenyl diphosphate + H2O = di-trans,octa-cis-undecaprenyl phosphate + phosphate + H(+). In terms of biological role, catalyzes the dephosphorylation of undecaprenyl diphosphate (UPP). Confers resistance to bacitracin. This chain is Undecaprenyl-diphosphatase, found in Cellvibrio japonicus (strain Ueda107) (Pseudomonas fluorescens subsp. cellulosa).